Reading from the N-terminus, the 154-residue chain is Fibroblast growth factor 2 (154 aa).

A propeptide spanning residues 1-9 (MAASGITSL) is cleaved from the precursor. Residue N35 coordinates heparin. At Y81 the chain carries Phosphotyrosine; by TEC. K94 participates in a covalent cross-link: Glycyl lysine isopeptide (Lys-Gly) (interchain with G-Cter in SUMO1). Residues 127–143 (KRTGQYKLGSKTGPGQK) form a heparin-binding region.

Belongs to the heparin-binding growth factors family. Monomer. Homodimer. Interacts with FGFR1, FGFR2, FGFR3 and FGFR4. Affinity between fibroblast growth factors (FGFs) and their receptors is increased by heparan sulfate glycosaminoglycans that function as coreceptors. Interacts with CSPG4, FGFBP1 and TEC. Found in a complex with FGFBP1, FGF1 and FGF2. Interacts with FGFBP3. Interacts with integrin ITGAV:ITGB3; the interaction is required for FGF2 signaling. Interacts with SNORC (via the extracellular domain). Interacts with glypican GPC3. In terms of processing, phosphorylation at Tyr-81 regulates FGF2 unconventional secretion.

It localises to the secreted. The protein localises to the nucleus. In terms of biological role, acts as a ligand for FGFR1, FGFR2, FGFR3 and FGFR4. Also acts as an integrin ligand which is required for FGF2 signaling. Binds to integrin ITGAV:ITGB3. Plays an important role in the regulation of cell survival, cell division, cell differentiation and cell migration. Functions as a potent mitogen in vitro. Can induce angiogenesis. Mediates phosphorylation of ERK1/2 and thereby promotes retinal lens fiber differentiation. The chain is Fibroblast growth factor 2 (Fgf2) from Mus musculus (Mouse).